A 259-amino-acid polypeptide reads, in one-letter code: Apolipoprotein A-I (259 aa).

The signal sequence occupies residues 1-18; the sequence is MKAAVLAVALVFLTGCQA. 2 consecutive repeat copies span residues 67 to 88 and 89 to 110. A 10 X approximate tandem repeats region spans residues 67-259; it reads LNLLDNWDTL…IDEAKKKLNA (193 aa). Methionine 109 carries the post-translational modification Methionine sulfoxide. The stretch at 111 to 121 is one 3; half-length repeat; the sequence is KDLENVKQKMQ. The stretch at 122 to 143 is repeat 4; it reads PHLDEFQEKWNEEVEAYRQKLE. The 5; truncated repeat unit spans residues 144–161; that stretch reads PLGTELHKNAKEMQRHLK. Residues 162-183 form repeat 6; the sequence is VVAEEFRDRMRVNADALRAKFG. The 7; truncated repeat unit spans residues 184–203; sequence LYSDQMRENLAQRLTEIKNH. Methionine 189 carries the post-translational modification Methionine sulfoxide. Copy 8 of the repeat occupies 204-225; the sequence is PTLIEYHTKASDHLKTLGEKAK. One copy of the 9; half-length repeat lies at 226-236; the sequence is PALDDLGQGLM. Methionine 236 carries the post-translational modification Methionine sulfoxide. Repeat unit 10 spans residues 237-259; that stretch reads PVLEAWKAKIMSMIDEAKKKLNA.

The protein belongs to the apolipoprotein A1/A4/E family. In terms of assembly, homodimer. Interacts with APOA1BP and CLU. Component of a sperm activating protein complex (SPAP), consisting of APOA1, an immunoglobulin heavy chain, an immunoglobulin light chain and albumin. Interacts with NDRG1. Interacts with SCGB3A2. Interacts with NAXE and YJEFN3. Post-translationally, glycosylated. In terms of processing, palmitoylated. Phosphorylation sites are present in the extracellular medium. Major protein of plasma HDL, also found in chylomicrons.

It localises to the secreted. Its function is as follows. Participates in the reverse transport of cholesterol from tissues to the liver for excretion by promoting cholesterol efflux from tissues and by acting as a cofactor for the lecithin cholesterol acyltransferase (LCAT). As part of the SPAP complex, activates spermatozoa motility. In Rattus norvegicus (Rat), this protein is Apolipoprotein A-I (Apoa1).